Reading from the N-terminus, the 83-residue chain is Large ribosomal subunit protein eL14 (83 aa).

The protein belongs to the eukaryotic ribosomal protein eL14 family. In terms of assembly, part of the 50S ribosomal subunit.

The polypeptide is Large ribosomal subunit protein eL14 (Thermococcus kodakarensis (strain ATCC BAA-918 / JCM 12380 / KOD1) (Pyrococcus kodakaraensis (strain KOD1))).